The sequence spans 207 residues: GTP-binding protein RHO1 (207 aa).

18–25 (GDGACGKT) contributes to the GTP binding site. Residues 40–48 (YVPTVFDNY) carry the Effector region motif. GTP-binding positions include 65 to 69 (DTAGQ) and 123 to 126 (CKAD). The segment at 187–207 (GKQGKSKAKSDKKKKKKCVVL) is disordered. Residues 190–207 (GKSKAKSDKKKKKKCVVL) show a composition bias toward basic residues. Cys-204 carries the cysteine methyl ester modification. Residue Cys-204 is the site of S-geranylgeranyl cysteine attachment. A propeptide spans 205-207 (VVL) (removed in mature form).

The protein belongs to the small GTPase superfamily. Rho family.

The protein resides in the cell membrane. Involved in the regulation of actin polarization. Rho proteins are required for distinct steps during polarized hyphal growth of A.gossypii. The sequence is that of GTP-binding protein RHO1 (RHO1) from Eremothecium gossypii (strain ATCC 10895 / CBS 109.51 / FGSC 9923 / NRRL Y-1056) (Yeast).